The chain runs to 117 residues: MTRVKRGNVARKRRKKVLKLAKGFRGSHSKLFRTANQQVMKALRNAYRDRRKRKRDFRRLWITRINAAARVHGISYSKLTGQLKKANIELNRKMLAQLAILDPQAFAKVVETANAAQ.

This sequence belongs to the bacterial ribosomal protein bL20 family.

In terms of biological role, binds directly to 23S ribosomal RNA and is necessary for the in vitro assembly process of the 50S ribosomal subunit. It is not involved in the protein synthesizing functions of that subunit. This chain is Large ribosomal subunit protein bL20, found in Rippkaea orientalis (strain PCC 8801 / RF-1) (Cyanothece sp. (strain PCC 8801)).